We begin with the raw amino-acid sequence, 249 residues long: Type III pantothenate kinase (249 aa).

6-13 (DCGNSFIK) lines the ATP pocket. Substrate contacts are provided by residues Tyr-93 and 100 to 103 (GLDR). Catalysis depends on Asp-102, which acts as the Proton acceptor. Asp-122 contributes to the K(+) binding site. Thr-125 is a binding site for ATP. Thr-181 contacts substrate.

This sequence belongs to the type III pantothenate kinase family. In terms of assembly, homodimer. Requires NH4(+) as cofactor. It depends on K(+) as a cofactor.

It localises to the cytoplasm. It carries out the reaction (R)-pantothenate + ATP = (R)-4'-phosphopantothenate + ADP + H(+). Its pathway is cofactor biosynthesis; coenzyme A biosynthesis; CoA from (R)-pantothenate: step 1/5. Its function is as follows. Catalyzes the phosphorylation of pantothenate (Pan), the first step in CoA biosynthesis. In Pseudomonas fluorescens (strain Pf0-1), this protein is Type III pantothenate kinase.